A 727-amino-acid chain; its full sequence is Elongation factor 2 (727 aa).

The region spanning 19-260 is the tr-type G domain; that stretch reads DQIRNMGICA…MAITHLPNPL (242 aa). Residues 28–35, 94–98, and 148–151 contribute to the GTP site; these read AHIDHGKT, DTPGH, and NKVD. Diphthamide is present on His-603.

The protein belongs to the TRAFAC class translation factor GTPase superfamily. Classic translation factor GTPase family. EF-G/EF-2 subfamily.

Its subcellular location is the cytoplasm. Functionally, catalyzes the GTP-dependent ribosomal translocation step during translation elongation. During this step, the ribosome changes from the pre-translocational (PRE) to the post-translocational (POST) state as the newly formed A-site-bound peptidyl-tRNA and P-site-bound deacylated tRNA move to the P and E sites, respectively. Catalyzes the coordinated movement of the two tRNA molecules, the mRNA and conformational changes in the ribosome. The polypeptide is Elongation factor 2 (Methanococcus maripaludis (strain C6 / ATCC BAA-1332)).